We begin with the raw amino-acid sequence, 243 residues long: Probable transcriptional regulatory protein Athe_0816 (243 aa).

The protein belongs to the TACO1 family.

The protein resides in the cytoplasm. This chain is Probable transcriptional regulatory protein Athe_0816, found in Caldicellulosiruptor bescii (strain ATCC BAA-1888 / DSM 6725 / KCTC 15123 / Z-1320) (Anaerocellum thermophilum).